We begin with the raw amino-acid sequence, 300 residues long: Protein TRACHEARY ELEMENT DIFFERENTIATION-RELATED 7A (300 aa).

Residues 1 to 181 (MASPLSQSVF…HIIPPPPPSP (181 aa)) form a disordered region. Residues 1-187 (MASPLSQSVF…PPSPSNHSTT (187 aa)) lie on the Extracellular side of the membrane. The segment covering 12 to 181 (HFPPPSPAAT…HIIPPPPPSP (170 aa)) has biased composition (pro residues). The N-linked (GlcNAc...) asparagine glycan is linked to Asn-183. The chain crosses the membrane as a helical span at residues 188 to 208 (IVVIFVSCGGVFFLAFAMAAL). The Cytoplasmic portion of the chain corresponds to 209-300 (WCFLKKKKKK…SSFGHHYLHG (92 aa)).

As to expression, accumulates in cells differentiating into tracheary element (TE) which undergo secondary cell wall (SCW) formation.

It localises to the cell membrane. Its subcellular location is the secreted. It is found in the cell wall. Its function is as follows. Involved in the secondary cell wall (SCW) formation of vessel elements (e.g. protoxylem and metaxylem), thus promoting tracheary element (TE) differentiation. This chain is Protein TRACHEARY ELEMENT DIFFERENTIATION-RELATED 7A, found in Zinnia elegans (Garden zinnia).